The primary structure comprises 172 residues: Large ribosomal subunit protein uL5 (172 aa).

The protein belongs to the universal ribosomal protein uL5 family. As to quaternary structure, part of the 50S ribosomal subunit; contacts the 5S rRNA and probably tRNA. Forms a bridge to the 30S subunit in the 70S ribosome.

Its function is as follows. This is one of the proteins that bind and probably mediate the attachment of the 5S RNA into the large ribosomal subunit, where it forms part of the central protuberance. In the 70S ribosome it contacts protein S13 of the 30S subunit (bridge B1b), connecting the 2 subunits; this bridge is implicated in subunit movement. May contact the P site tRNA; the 5S rRNA and some of its associated proteins might help stabilize positioning of ribosome-bound tRNAs. The polypeptide is Large ribosomal subunit protein uL5 (Haloferax mediterranei (strain ATCC 33500 / DSM 1411 / JCM 8866 / NBRC 14739 / NCIMB 2177 / R-4) (Halobacterium mediterranei)).